Consider the following 425-residue polypeptide: Enolase (425 aa).

A (2R)-2-phosphoglycerate-binding site is contributed by glutamine 163. The Proton donor role is filled by glutamate 205. Residues aspartate 242, glutamate 285, and aspartate 312 each coordinate Mg(2+). (2R)-2-phosphoglycerate-binding residues include lysine 337, arginine 366, serine 367, and lysine 388. Lysine 337 (proton acceptor) is an active-site residue.

The protein belongs to the enolase family. It depends on Mg(2+) as a cofactor.

Its subcellular location is the cytoplasm. The protein resides in the secreted. The protein localises to the cell surface. It carries out the reaction (2R)-2-phosphoglycerate = phosphoenolpyruvate + H2O. It participates in carbohydrate degradation; glycolysis; pyruvate from D-glyceraldehyde 3-phosphate: step 4/5. Catalyzes the reversible conversion of 2-phosphoglycerate (2-PG) into phosphoenolpyruvate (PEP). It is essential for the degradation of carbohydrates via glycolysis. This is Enolase from Ruegeria sp. (strain TM1040) (Silicibacter sp.).